The chain runs to 54 residues: Movement protein p6 (54 aa).

The Lumenal portion of the chain corresponds to 1–10; that stretch reads MDCVLRSYLL. Residues 11–31 form a helical membrane-spanning segment; the sequence is LAFGFLICLFLFCLVVFIWFV. Over 32-54 the chain is Cytoplasmic; sequence YKQILFRTTAQSNEARHNHSTVV.

As to quaternary structure, homodimer; disulfide-linked.

The protein resides in the host rough endoplasmic reticulum membrane. In terms of biological role, transports viral genome to neighboring plant cells directly through plasmosdesmata, without any budding. The movement protein allows efficient cell to cell propagation, by bypassing the host cell wall barrier. Two movement proteins, p6, Hsp70h and three structural proteins, CP, CPm, and P64 are essential for cell-cell movement. Also plays a role in virion formation. Together with CPm and p64, encapsidates the 5'-terminal portion of the viral genome. The protein is Movement protein p6 of Beet yellows virus (isolate Ukraine) (BYV).